The sequence spans 601 residues: Oligoendopeptidase F homolog (601 aa).

Residue H387 coordinates Zn(2+). Residue E388 is part of the active site. Zn(2+)-binding residues include H391 and H394.

Belongs to the peptidase M3 family. Requires Zn(2+) as cofactor.

Functionally, hydrolyzes peptides containing between 7 and 17 amino acids with a rather wide specificity. The polypeptide is Oligoendopeptidase F homolog (pepF) (Lactococcus lactis subsp. lactis (strain IL1403) (Streptococcus lactis)).